Reading from the N-terminus, the 69-residue chain is uncharacterized protein (69 aa).

Positions 23-46 (AENEGNRKENRRQMQSRNERGCNV) are disordered. Positions 26 to 44 (EGNRKENRRQMQSRNERGC) are enriched in basic and acidic residues.

This is an uncharacterized protein from Homo sapiens (Human).